We begin with the raw amino-acid sequence, 454 residues long: Bifunctional protein GlmU (454 aa).

Residues 1–232 (MTDRTCLSIV…VDNVIGINNR (232 aa)) are pyrophosphorylase. UDP-N-acetyl-alpha-D-glucosamine is bound by residues 11–14 (LAAG), Lys-25, Gln-78, and 83–84 (GT). Asp-108 is a Mg(2+) binding site. Residues Gly-144, Glu-158, Asn-173, and Asn-230 each coordinate UDP-N-acetyl-alpha-D-glucosamine. A Mg(2+)-binding site is contributed by Asn-230. Residues 233–253 (AELAEAETIWQNRKRRELMLS) are linker. An N-acetyltransferase region spans residues 254-454 (GVTLIAPETV…AIKAAKSVSK (201 aa)). UDP-N-acetyl-alpha-D-glucosamine-binding residues include Arg-319 and Lys-337. His-349 (proton acceptor) is an active-site residue. UDP-N-acetyl-alpha-D-glucosamine-binding residues include Tyr-352 and Asn-363. Acetyl-CoA is bound by residues Ala-366, 372–373 (NY), Ser-391, Ser-409, and Arg-426.

This sequence in the N-terminal section; belongs to the N-acetylglucosamine-1-phosphate uridyltransferase family. The protein in the C-terminal section; belongs to the transferase hexapeptide repeat family. As to quaternary structure, homotrimer. The cofactor is Mg(2+).

Its subcellular location is the cytoplasm. It carries out the reaction alpha-D-glucosamine 1-phosphate + acetyl-CoA = N-acetyl-alpha-D-glucosamine 1-phosphate + CoA + H(+). The catalysed reaction is N-acetyl-alpha-D-glucosamine 1-phosphate + UTP + H(+) = UDP-N-acetyl-alpha-D-glucosamine + diphosphate. It participates in nucleotide-sugar biosynthesis; UDP-N-acetyl-alpha-D-glucosamine biosynthesis; N-acetyl-alpha-D-glucosamine 1-phosphate from alpha-D-glucosamine 6-phosphate (route II): step 2/2. It functions in the pathway nucleotide-sugar biosynthesis; UDP-N-acetyl-alpha-D-glucosamine biosynthesis; UDP-N-acetyl-alpha-D-glucosamine from N-acetyl-alpha-D-glucosamine 1-phosphate: step 1/1. Its pathway is bacterial outer membrane biogenesis; LPS lipid A biosynthesis. Functionally, catalyzes the last two sequential reactions in the de novo biosynthetic pathway for UDP-N-acetylglucosamine (UDP-GlcNAc). The C-terminal domain catalyzes the transfer of acetyl group from acetyl coenzyme A to glucosamine-1-phosphate (GlcN-1-P) to produce N-acetylglucosamine-1-phosphate (GlcNAc-1-P), which is converted into UDP-GlcNAc by the transfer of uridine 5-monophosphate (from uridine 5-triphosphate), a reaction catalyzed by the N-terminal domain. The protein is Bifunctional protein GlmU of Brucella canis (strain ATCC 23365 / NCTC 10854 / RM-666).